A 307-amino-acid polypeptide reads, in one-letter code: Transcription initiation factor IIB 2 (307 aa).

The TFIIB-type zinc-finger motif lies at 7–38 (TPKRCPECNSEHLIRDYEHGELICADCGAVIE). 4 residues coordinate Zn(2+): C11, C14, C30, and C33. A run of 2 repeats spans residues 124–207 (QLLN…AKEL) and 218–299 (SYIS…EISK).

It belongs to the TFIIB family.

Functionally, stabilizes TBP binding to an archaeal box-A promoter. Also responsible for recruiting RNA polymerase II to the pre-initiation complex (DNA-TBP-TFIIB). The protein is Transcription initiation factor IIB 2 of Thermoplasma acidophilum (strain ATCC 25905 / DSM 1728 / JCM 9062 / NBRC 15155 / AMRC-C165).